The primary structure comprises 257 residues: Large ribosomal subunit protein eL8z (257 aa).

Belongs to the eukaryotic ribosomal protein eL8 family.

This Arabidopsis thaliana (Mouse-ear cress) protein is Large ribosomal subunit protein eL8z (RPL7AA).